The chain runs to 681 residues: Transketolase 2 (681 aa).

His30 contributes to the substrate binding site. Residues His69 and 116-118 (GPL) each bind thiamine diphosphate. Asp157 is a Mg(2+) binding site. Residues Gly158 and Asn187 each contribute to the thiamine diphosphate site. Asn187 and Ile189 together coordinate Mg(2+). Substrate is bound by residues His263, Arg359, and Ser386. His263 is a binding site for thiamine diphosphate. Positions 418 and 445 each coordinate thiamine diphosphate. Residue Glu418 is the Proton donor of the active site. Residues His469, Asp477, and Arg528 each coordinate substrate.

This sequence belongs to the transketolase family. As to quaternary structure, homodimer. Requires Mg(2+) as cofactor. Ca(2+) serves as cofactor. It depends on Mn(2+) as a cofactor. Co(2+) is required as a cofactor. The cofactor is thiamine diphosphate.

It catalyses the reaction D-sedoheptulose 7-phosphate + D-glyceraldehyde 3-phosphate = aldehydo-D-ribose 5-phosphate + D-xylulose 5-phosphate. Catalyzes the transfer of a two-carbon ketol group from a ketose donor to an aldose acceptor, via a covalent intermediate with the cofactor thiamine pyrophosphate. In Saccharomyces cerevisiae (strain ATCC 204508 / S288c) (Baker's yeast), this protein is Transketolase 2 (TKL2).